The chain runs to 288 residues: G1/S-specific cyclin-D2 (288 aa).

The Cyclin N-terminal domain occupies valine 26–leucine 151. The tract at residues aspartate 264–leucine 288 is disordered. Position 270 is a phosphoserine (serine 270). Threonine 279 bears the Phosphothreonine mark.

It belongs to the cyclin family. Cyclin D subfamily. In terms of assembly, interacts with either CDK4 or CDK6 protein kinase to form a serine/threonine kinase holoenzyme complex. The cyclin subunit imparts substrate specificity to the complex. Post-translationally, phosphorylation at Thr-279 by MAP kinases is required for ubiquitination and degradation by the DCX(AMBRA1) complex. Ubiquitinated by the DCX(AMBRA1) complex during the transition from G1 to S cell phase, leading to its degradation: ubiquitination is dependent on Thr-279 phosphorylation. The DCX(AMBRA1) complex represents the major regulator of CCND2 stability during the G1/S transition. Polyubiquitinated by the SCF(FBXL2) complex, leading to proteasomal degradation.

It is found in the nucleus. Its subcellular location is the cytoplasm. It localises to the nucleus membrane. In terms of biological role, regulatory component of the cyclin D2-CDK4 (DC) complex that phosphorylates and inhibits members of the retinoblastoma (RB) protein family including RB1 and regulates the cell-cycle during G(1)/S transition. Phosphorylation of RB1 allows dissociation of the transcription factor E2F from the RB/E2F complex and the subsequent transcription of E2F target genes which are responsible for the progression through the G(1) phase. Hypophosphorylates RB1 in early G(1) phase. Cyclin D-CDK4 complexes are major integrators of various mitogenenic and antimitogenic signals. This Sus scrofa (Pig) protein is G1/S-specific cyclin-D2 (CCND2).